Reading from the N-terminus, the 32-residue chain is uncharacterized protein (32 aa).

This is an uncharacterized protein from Treponema pallidum (strain Nichols).